A 1155-amino-acid polypeptide reads, in one-letter code: ATP-dependent helicase/deoxyribonuclease subunit B (1155 aa).

The UvrD-like helicase ATP-binding domain occupies 1–278 (MSQLNAYIGR…FTKQERFENR (278 aa)). 9–16 (GRAGTGKS) contacts ATP. The UvrD-like helicase C-terminal domain maps to 270–584 (TKQERFENRD…SIGSMDLAKV (315 aa)). 4 residues coordinate [4Fe-4S] cluster: Cys-785, Cys-1112, Cys-1115, and Cys-1121.

This sequence belongs to the helicase family. AddB/RexB type 1 subfamily. As to quaternary structure, heterodimer of AddA and AddB. Mg(2+) serves as cofactor. The cofactor is [4Fe-4S] cluster.

Its function is as follows. The heterodimer acts as both an ATP-dependent DNA helicase and an ATP-dependent, dual-direction single-stranded exonuclease. Recognizes the chi site generating a DNA molecule suitable for the initiation of homologous recombination. The AddB subunit has 5' -&gt; 3' nuclease activity but not helicase activity. The chain is ATP-dependent helicase/deoxyribonuclease subunit B from Staphylococcus carnosus (strain TM300).